Consider the following 554-residue polypeptide: uncharacterized protein (554 aa).

Residues 1 to 25 (MSSSIPPRLYDMSPTESKKQEDVSE) form a disordered region. Ser13 carries the phosphoserine modification. 6 helical membrane-spanning segments follow: residues 82 to 102 (FFVA…TSLI), 120 to 140 (APYL…VWSL), 149 to 169 (WAFN…GASP), 171 to 191 (FASI…NLPV), 210 to 230 (VMSF…WGLI), and 253 to 273 (FLFT…LVSV). Phosphoserine is present on Ser334. 6 helical membrane-spanning segments follow: residues 364 to 384 (LAIS…AFPL), 412 to 432 (SLIV…LVEF), 437 to 457 (KGTL…STTA), 462 to 482 (AYLG…GVLY), 497 to 517 (AVGL…VIAM), and 525 to 545 (APIF…VFFP).

This sequence belongs to the major facilitator superfamily.

It localises to the endoplasmic reticulum. Its subcellular location is the membrane. This is an uncharacterized protein from Schizosaccharomyces pombe (strain 972 / ATCC 24843) (Fission yeast).